Consider the following 292-residue polypeptide: ATP synthase gamma chain (292 aa).

It belongs to the ATPase gamma chain family. F-type ATPases have 2 components, CF(1) - the catalytic core - and CF(0) - the membrane proton channel. CF(1) has five subunits: alpha(3), beta(3), gamma(1), delta(1), epsilon(1). CF(0) has three main subunits: a, b and c.

The protein resides in the cell inner membrane. Produces ATP from ADP in the presence of a proton gradient across the membrane. The gamma chain is believed to be important in regulating ATPase activity and the flow of protons through the CF(0) complex. The chain is ATP synthase gamma chain from Hydrogenobaculum sp. (strain Y04AAS1).